The primary structure comprises 624 residues: LRR receptor kinase BAK1 (624 aa).

The signal sequence occupies residues 1–25 (MAAPRWAVWAVLLLRLLVPAARVLA). The Extracellular portion of the chain corresponds to 26–237 (NMEGDALHSL…QSPGSSSSTG (212 aa)). 4 LRR repeats span residues 91–115 (LKNL…LGNL), 117–139 (NLVS…LGNL), 140–163 (LKLR…LTAI), and 164–188 (TALQ…SFSL). N-linked (GlcNAc...) asparagine glycosylation is found at Asn103, Asn114, Asn127, Asn149, and Asn175. The segment at 205-236 (TTKPCPGAPPFSPPPPYNPPTPVQSPGSSSST) is disordered. Residues 210 to 227 (PGAPPFSPPPPYNPPTPV) are compositionally biased toward pro residues. A helical transmembrane segment spans residues 238–258 (AIAGGVAAGAALLFAIPAIGF). Residues 259 to 624 (AWYRRRKPQE…LHAVELSGPR (366 aa)) lie on the Cytoplasmic side of the membrane. The region spanning 301-588 (FSNKNILGRG…GLAERWEEWQ (288 aa)) is the Protein kinase domain. ATP-binding positions include 307–315 (LGRGGFGKV) and Lys329. The active-site Proton acceptor is the Asp428.

This sequence belongs to the protein kinase superfamily. Ser/Thr protein kinase family. Forms homodimers. Interacts with BRI1. Interacts with REM4.1.

Its subcellular location is the cell membrane. It carries out the reaction L-seryl-[protein] + ATP = O-phospho-L-seryl-[protein] + ADP + H(+). The catalysed reaction is L-threonyl-[protein] + ATP = O-phospho-L-threonyl-[protein] + ADP + H(+). In terms of biological role, LRR receptor kinase involved in defense response. Does not seem to be required specifically for XA21-mediated immunity or basal resistance to Xanthomonas oryzae pv. oryzae (Xoo), or immunity to Magnaporthe oryzae. Involved in brassinosteroid (BR) signaling pathway. Acts as a coreceptor of BRI1. Forms at the plasma membrane a receptor complex with BRI1 which is activated in response to brassinolide. Phosphorylates BRI1. Required for normal plant growth and leaf development. Possesses kinase activity in vitro. The polypeptide is LRR receptor kinase BAK1 (Oryza sativa subsp. indica (Rice)).